The primary structure comprises 364 residues: Aminomethyltransferase (364 aa).

The protein belongs to the GcvT family. As to quaternary structure, the glycine cleavage system is composed of four proteins: P, T, L and H.

The catalysed reaction is N(6)-[(R)-S(8)-aminomethyldihydrolipoyl]-L-lysyl-[protein] + (6S)-5,6,7,8-tetrahydrofolate = N(6)-[(R)-dihydrolipoyl]-L-lysyl-[protein] + (6R)-5,10-methylene-5,6,7,8-tetrahydrofolate + NH4(+). In terms of biological role, the glycine cleavage system catalyzes the degradation of glycine. This chain is Aminomethyltransferase, found in Geobacillus kaustophilus (strain HTA426).